A 76-amino-acid chain; its full sequence is Beta-defensin 121 (76 aa).

Residues 1–15 (MKLLLLLLTVTLLLA) form the signal peptide. 3 disulfides stabilise this stretch: Cys-23-Cys-50, Cys-30-Cys-44, and Cys-34-Cys-51.

Belongs to the beta-defensin family. As to expression, abundant expression in the male reproductive tract only.

The protein resides in the secreted. Functionally, has antibacterial activity. The sequence is that of Beta-defensin 121 (DEFB121) from Homo sapiens (Human).